Consider the following 744-residue polypeptide: Phosphoribosylformylglycinamidine synthase subunit PurL (744 aa).

His50 is an active-site residue. 2 residues coordinate ATP: Tyr53 and Lys92. Glu94 serves as a coordination point for Mg(2+). Residues 95–98 (SHNH) and Arg117 each bind substrate. His96 serves as the catalytic Proton acceptor. Asp118 is a binding site for Mg(2+). Residue Gln241 participates in substrate binding. A Mg(2+)-binding site is contributed by Asp269. 313–315 (ESQ) lines the substrate pocket. Asp495 and Gly532 together coordinate ATP. A Mg(2+)-binding site is contributed by Asn533. Ser535 contacts substrate.

Belongs to the FGAMS family. In terms of assembly, monomer. Part of the FGAM synthase complex composed of 1 PurL, 1 PurQ and 2 PurS subunits.

The protein resides in the cytoplasm. It carries out the reaction N(2)-formyl-N(1)-(5-phospho-beta-D-ribosyl)glycinamide + L-glutamine + ATP + H2O = 2-formamido-N(1)-(5-O-phospho-beta-D-ribosyl)acetamidine + L-glutamate + ADP + phosphate + H(+). Its pathway is purine metabolism; IMP biosynthesis via de novo pathway; 5-amino-1-(5-phospho-D-ribosyl)imidazole from N(2)-formyl-N(1)-(5-phospho-D-ribosyl)glycinamide: step 1/2. In terms of biological role, part of the phosphoribosylformylglycinamidine synthase complex involved in the purines biosynthetic pathway. Catalyzes the ATP-dependent conversion of formylglycinamide ribonucleotide (FGAR) and glutamine to yield formylglycinamidine ribonucleotide (FGAM) and glutamate. The FGAM synthase complex is composed of three subunits. PurQ produces an ammonia molecule by converting glutamine to glutamate. PurL transfers the ammonia molecule to FGAR to form FGAM in an ATP-dependent manner. PurS interacts with PurQ and PurL and is thought to assist in the transfer of the ammonia molecule from PurQ to PurL. The chain is Phosphoribosylformylglycinamidine synthase subunit PurL from Rhizobium johnstonii (strain DSM 114642 / LMG 32736 / 3841) (Rhizobium leguminosarum bv. viciae).